We begin with the raw amino-acid sequence, 329 residues long: Putative 1-aminocyclopropane-1-carboxylate deaminase (329 aa).

Lys-54 is modified (N6-(pyridoxal phosphate)lysine).

Belongs to the ACC deaminase/D-cysteine desulfhydrase family. Pyridoxal 5'-phosphate serves as cofactor.

The enzyme catalyses 1-aminocyclopropane-1-carboxylate + H2O = 2-oxobutanoate + NH4(+). The chain is Putative 1-aminocyclopropane-1-carboxylate deaminase from Pyrococcus furiosus (strain ATCC 43587 / DSM 3638 / JCM 8422 / Vc1).